The sequence spans 157 residues: Small ribosomal subunit protein uS7 (157 aa).

It belongs to the universal ribosomal protein uS7 family. As to quaternary structure, part of the 30S ribosomal subunit. Contacts proteins S9 and S11.

In terms of biological role, one of the primary rRNA binding proteins, it binds directly to 16S rRNA where it nucleates assembly of the head domain of the 30S subunit. Is located at the subunit interface close to the decoding center, probably blocks exit of the E-site tRNA. The protein is Small ribosomal subunit protein uS7 of Francisella tularensis subsp. holarctica (strain OSU18).